Consider the following 134-residue polypeptide: Fluoride-specific ion channel FluC 2 (134 aa).

4 helical membrane-spanning segments follow: residues Leu-10 to Leu-30, Leu-43 to Pro-63, Leu-67 to Ala-87, and Phe-100 to Leu-120. 2 residues coordinate Na(+): Gly-75 and Thr-78.

This sequence belongs to the fluoride channel Fluc/FEX (TC 1.A.43) family.

The protein resides in the cell inner membrane. The catalysed reaction is fluoride(in) = fluoride(out). Its activity is regulated as follows. Na(+) is not transported, but it plays an essential structural role and its presence is essential for fluoride channel function. Fluoride-specific ion channel. Important for reducing fluoride concentration in the cell, thus reducing its toxicity. The polypeptide is Fluoride-specific ion channel FluC 2 (Synechococcus sp. (strain CC9902)).